The chain runs to 293 residues: tRNA(His) guanylyltransferase (293 aa).

3 residues coordinate Mg(2+): D29, G30, and D76. GTP contacts are provided by residues 29–34 and 75–76; these read DGRGFT and SD. The segment at 226–252 is disordered; that stretch reads KKVSEEEAEEMSSSAVPEVKSKSQVEK.

This sequence belongs to the tRNA(His) guanylyltransferase family. Requires Mg(2+) as cofactor.

The catalysed reaction is a 5'-end ribonucleotide-tRNA(His) + GTP + ATP + H2O = a 5'-end phospho-guanosine-ribonucleotide-tRNA(His) + AMP + 2 diphosphate + H(+). In terms of biological role, adds a GMP to the 5'-end of tRNA(His) after transcription and RNase P cleavage. In Neurospora crassa (strain ATCC 24698 / 74-OR23-1A / CBS 708.71 / DSM 1257 / FGSC 987), this protein is tRNA(His) guanylyltransferase (rgt-1).